Consider the following 428-residue polypeptide: Light-independent protochlorophyllide reductase subunit N (428 aa).

[4Fe-4S] cluster contacts are provided by cysteine 30, cysteine 55, and cysteine 116.

This sequence belongs to the BchN/ChlN family. Protochlorophyllide reductase is composed of three subunits; BchL, BchN and BchB. Forms a heterotetramer of two BchB and two BchN subunits. The cofactor is [4Fe-4S] cluster.

It catalyses the reaction chlorophyllide a + oxidized 2[4Fe-4S]-[ferredoxin] + 2 ADP + 2 phosphate = protochlorophyllide a + reduced 2[4Fe-4S]-[ferredoxin] + 2 ATP + 2 H2O. Its pathway is porphyrin-containing compound metabolism; bacteriochlorophyll biosynthesis (light-independent). Its function is as follows. Component of the dark-operative protochlorophyllide reductase (DPOR) that uses Mg-ATP and reduced ferredoxin to reduce ring D of protochlorophyllide (Pchlide) to form chlorophyllide a (Chlide). This reaction is light-independent. The NB-protein (BchN-BchB) is the catalytic component of the complex. This chain is Light-independent protochlorophyllide reductase subunit N, found in Bradyrhizobium sp. (strain BTAi1 / ATCC BAA-1182).